The chain runs to 582 residues: ATP-dependent lipid A-core flippase (582 aa).

The next 5 helical transmembrane spans lie at 16–36 (LWPT…ALIL), 63–83 (VLVW…ITSY), 153–173 (IIGL…ILIV), 253–273 (PIIQ…ASFP), and 275–295 (VMDN…IALM). The ABC transmembrane type-1 domain occupies 28–310 (IVAGVALILN…LTNVNAQFQR (283 aa)). Residues 342-578 (VEFRNVTFTY…RGVYAQLHKM (237 aa)) form the ABC transporter domain. 376–383 (GRSGSGKS) lines the ATP pocket.

This sequence belongs to the ABC transporter superfamily. Lipid exporter (TC 3.A.1.106) family. As to quaternary structure, homodimer.

It is found in the cell inner membrane. It catalyses the reaction ATP + H2O + lipid A-core oligosaccharideSide 1 = ADP + phosphate + lipid A-core oligosaccharideSide 2.. Its function is as follows. Involved in lipopolysaccharide (LPS) biosynthesis. Translocates lipid A-core from the inner to the outer leaflet of the inner membrane. Transmembrane domains (TMD) form a pore in the inner membrane and the ATP-binding domain (NBD) is responsible for energy generation. In Shigella sonnei (strain Ss046), this protein is ATP-dependent lipid A-core flippase.